We begin with the raw amino-acid sequence, 671 residues long: Preterminal protein (671 aa).

Positions 380 to 389 match the Nuclear localization signal motif; sequence RLPVRRRRRR. The segment at 386–411 is disordered; that stretch reads RRRRVPPPPPPPEEEEGEALMEEEIE. A compositionally biased stretch (acidic residues) spans 397 to 411; that stretch reads PEEEEGEALMEEEIE. Ser-580 carries the O-(5'-phospho-DNA)-serine modification. Residues 645-671 are disordered; the sequence is GADVPLPPLPAGPEPPLPPGARPRHRF. Residues 649 to 665 are compositionally biased toward pro residues; that stretch reads PLPPLPAGPEPPLPPGA.

The protein belongs to the adenoviridae terminal protein family. Heterodimer with the polymerase; this heterodimer binds to bp 9 to 18 of the genome. Interacts with host POU2F1; POU2F1 binds to the auxiliary sequences in the inverted terminal repeats and tethers the pTP-POL heterodimer to the origin DNA thereby participating in the assembly of the pre-initiation complex (POL-TP-DBP-NFIA-POU2F1). Preterminal protein is used to replicate viral genome, upon genomic encapsidation it is processed first into iTP and finally into TP by adenovirus protease.

It is found in the host nucleus matrix. Protein covalently bound to the viral DNA that acts as a primer for viral genomic replication by DNA strand displacement. Assembles on the viral origin of replication in an initiation complex with viral polymerase, DBP, host NFIA and host POU2F1/OCT1. During initiation, the polymerase covalently couples the first dCTP with Ser-580 of pTP. The terminal protein stimulates the template activity over 20 fold compared to protein-free templates. Neo-synthesized viral genomes are linked to two preterminal proteins, one for each 5' end. These new genomes are encapsidated in the nucleus, and during capsid maturation by viral protease, preterminal protein is first cleaved into intermediary (iTP), then into mature TP. May play a role in host nuclear matrix localization of genomic DNA. The polypeptide is Preterminal protein (Human adenovirus C serotype 5 (HAdV-5)).